The following is a 136-amino-acid chain: Cyclase aurE (136 aa).

It belongs to the aurE cyclase family.

It participates in polyketide biosynthesis. Cyclase; part of the gene cluster that mediates the biosynthesis of aurovertins, fungal polyketides that exhibit potent inhibition of adenosine triphosphate synthase. Tha biosynthesis starts with the HR-PKS aurA that selects propionate as the starter unit; synthesizes a hexa-ene chain through the repeated functions of the KR and DH domains in the first six iterations; selectively introduces three alpha-methyl substitutions at C4, C6, and C16 using the S-adensylmethionine-dependent cMET; and shuts off KR and DH in the last three iterations to afford a 1,3,5-triketo portion that can undergo intramolecular cyclization to yield the alpha-pyrone intermediate. AurE may act as a cyclase and enhances the rate of pyrone formation and product release of aurA. The methyltransferase aurB then methylates the C17 hydroxyl group. C17 methylation is required to initiate epoxidation by the downstream monooxygenase aurC. The monooxygenase aurC and the epoxide hydrolase aurD can iteratively transform the terminal triene portion of the methylated precursor into the dioxabicyclo[3.2.1]octane scaffold of aurovertin E. Epoxidation modifications of the precursor occur in two separate steps; bis-epoxidation of the two terminal olefins takes place first, followed by another epoxidation that occurs at C7-C8 after tetrahydrofuran formation. The O-acyltransferase aurG converts aurovertin E to aurovertin A. The sequence is that of Cyclase aurE from Calcarisporium arbuscula (Dendryphion arbuscula).